The chain runs to 339 residues: Phosphate acyltransferase (339 aa).

Belongs to the PlsX family. In terms of assembly, homodimer. Probably interacts with PlsY.

The protein localises to the cytoplasm. It catalyses the reaction a fatty acyl-[ACP] + phosphate = an acyl phosphate + holo-[ACP]. It functions in the pathway lipid metabolism; phospholipid metabolism. Functionally, catalyzes the reversible formation of acyl-phosphate (acyl-PO(4)) from acyl-[acyl-carrier-protein] (acyl-ACP). This enzyme utilizes acyl-ACP as fatty acyl donor, but not acyl-CoA. This is Phosphate acyltransferase from Ruthia magnifica subsp. Calyptogena magnifica.